Here is a 31-residue protein sequence, read N- to C-terminus: Nemertide alpha-6 (31 aa).

Disulfide bonds link cysteine 2–cysteine 16, cysteine 9–cysteine 20, and cysteine 15–cysteine 26. 2 positions are modified to 4-hydroxyproline: proline 28 and proline 29.

It belongs to the nemertide family. As to expression, confined to the epidermis and to the mucus layer.

It is found in the secreted. Functionally, highly potent toxin against both insect and some mammalian sodium channels (Nav). It potently inhibits inactivation of insect sodium channels of B.germanica (BgNav1) (EC(50)=2.6 nM) and also delays the inactivation of mammalian Nav with potent activity on Nav1.1/SCN1A (hNav1.1/SCN1A; EC(50)=7.9 nM, rNav1.2/SCN2A; EC(50)=24.3 nM, rNav1.3/SCN3A; EC(50)=105.6 nM, rNav1.4/SCN4A; EC(50)=46.4 nM, hNav1.5/SCN5A; EC(50)=215.2 nM, mNav1.6/SCN8A; EC(50)=36.3 nM, hNav1.9/SCN9A; EC(50)=97.2 nM). 1 uM is enough to completely inhibits the inactivation, resulting in sustained non-inactivating currents. In addition, the toxin significantly enhances the recovery from inactivation, and the open state is not required for the toxin to interact with the channel. In vivo, injection into brine shrimp (Artemia salina) stops movement or causes death after 24 hours (EC(50)=2.8 uM). This is Nemertide alpha-6 from Lineus sanguineus (Ribbon worm).